The primary structure comprises 261 residues: Taurine import ATP-binding protein TauB (261 aa).

The region spanning 4–233 (LTADRVSVRY…RWRAGDSARA (230 aa)) is the ABC transporter domain. Position 38 to 45 (38 to 45 (GPSGCGKT)) interacts with ATP.

This sequence belongs to the ABC transporter superfamily. Taurine importer (TC 3.A.1.17.1) family. The complex is composed of two ATP-binding proteins (TauB), two transmembrane proteins (TauC) and a solute-binding protein (TauA).

The protein resides in the cell inner membrane. The catalysed reaction is taurine(out) + ATP + H2O = taurine(in) + ADP + phosphate + H(+). Functionally, part of the ABC transporter complex TauABC involved in taurine import. Responsible for energy coupling to the transport system. This Chromobacterium violaceum (strain ATCC 12472 / DSM 30191 / JCM 1249 / CCUG 213 / NBRC 12614 / NCIMB 9131 / NCTC 9757 / MK) protein is Taurine import ATP-binding protein TauB.